Reading from the N-terminus, the 79-residue chain is Sulfur carrier protein TusA (79 aa).

Catalysis depends on Cys17, which acts as the Cysteine persulfide intermediate.

This sequence belongs to the sulfur carrier protein TusA family.

The protein resides in the cytoplasm. Sulfur carrier protein which probably makes part of a sulfur-relay system. This chain is Sulfur carrier protein TusA, found in Idiomarina loihiensis (strain ATCC BAA-735 / DSM 15497 / L2-TR).